The primary structure comprises 64 residues: MSETITVNCPTCGKTVVWGEISPFRPFCSKRCQLIDLGEWAAEEKRIPSSGDLSESDDWSEEPK.

Residues cysteine 9, cysteine 12, cysteine 28, and cysteine 32 each coordinate Zn(2+). Residues 45–64 (KRIPSSGDLSESDDWSEEPK) form a disordered region. Acidic residues predominate over residues 54 to 64 (SESDDWSEEPK).

The protein belongs to the DNA gyrase inhibitor YacG family. Interacts with GyrB. The cofactor is Zn(2+).

Inhibits all the catalytic activities of DNA gyrase by preventing its interaction with DNA. Acts by binding directly to the C-terminal domain of GyrB, which probably disrupts DNA binding by the gyrase. This is DNA gyrase inhibitor YacG from Escherichia fergusonii (strain ATCC 35469 / DSM 13698 / CCUG 18766 / IAM 14443 / JCM 21226 / LMG 7866 / NBRC 102419 / NCTC 12128 / CDC 0568-73).